The primary structure comprises 505 residues: Folate transporter 1 (505 aa).

A run of 4 helical transmembrane segments spans residues 58–78 (SLIA…IYLL), 89–109 (LSIV…WAVI), 122–142 (YYLL…GLIT), and 146–166 (LFIT…CNVI). N-linked (GlcNAc...) asparagine glycans are attached at residues Asn177, Asn181, and Asn186. 2 helical membrane-spanning segments follow: residues 192 to 212 (AFRK…LLLI) and 216 to 236 (HIFL…FFII). Residue Asn240 is glycosylated (N-linked (GlcNAc...) asparagine). Helical transmembrane passes span 266–286 (IIFI…FFYI), 300–320 (MAMF…LFFT), 326–346 (KLLL…LVVI), 352–372 (FLFI…EFIA), and 405–425 (FASI…NITS). Asn427 is a glycosylation site (N-linked (GlcNAc...) asparagine). A helical membrane pass occupies residues 431 to 451 (LPYMIIICCLTNIIPIFFLYI). A glycan (N-linked (GlcNAc...) asparagine) is linked at Asn454.

This sequence belongs to the major facilitator superfamily. Folate-biopterin transporter (TC 2.A.71) family.

The protein resides in the cell membrane. The catalysed reaction is folate(in) + H(+)(in) = folate(out) + H(+)(out). Its activity is regulated as follows. Transport of folates is inhibited by probenecid and methotrexate. Folate transporter with broad substrate specificity. Transports folic acid, folinic acid, pteroic acid, dihydropteroic acid, the folate precursor p-amino benzoic acid (pABA) and the human folate catabolite pABA monoglutamate. The chain is Folate transporter 1 from Plasmodium falciparum (isolate 3D7).